Here is a 301-residue protein sequence, read N- to C-terminus: Ornithine carbamoyltransferase (301 aa).

Residues R100 and 127-130 contribute to the carbamoyl phosphate site; that span reads HPCQ. L-ornithine contacts are provided by residues N158, D221, and 225–226; that span reads SM. C260 and R288 together coordinate carbamoyl phosphate.

Belongs to the aspartate/ornithine carbamoyltransferase superfamily. OTCase family. As to quaternary structure, homododecamer.

Its subcellular location is the cytoplasm. The enzyme catalyses carbamoyl phosphate + L-ornithine = L-citrulline + phosphate + H(+). Its pathway is amino-acid biosynthesis; L-arginine biosynthesis; L-arginine from L-ornithine and carbamoyl phosphate: step 1/3. Reversibly catalyzes the transfer of the carbamoyl group from carbamoyl phosphate (CP) to the N(epsilon) atom of ornithine (ORN) to produce L-citrulline. This chain is Ornithine carbamoyltransferase (argF), found in Moritella profunda.